We begin with the raw amino-acid sequence, 305 residues long: Pseudouridine-5'-phosphate glycosidase (305 aa).

The active-site Proton donor is E22. 2 residues coordinate substrate: K84 and V104. D136 is a Mn(2+) binding site. Residue 138–140 (SAD) coordinates substrate. K157 functions as the Nucleophile in the catalytic mechanism.

The protein belongs to the pseudouridine-5'-phosphate glycosidase family. In terms of assembly, homotrimer. Mn(2+) serves as cofactor.

The catalysed reaction is D-ribose 5-phosphate + uracil = psi-UMP + H2O. Its function is as follows. Catalyzes the reversible cleavage of pseudouridine 5'-phosphate (PsiMP) to ribose 5-phosphate and uracil. Functions biologically in the cleavage direction, as part of a pseudouridine degradation pathway. This is Pseudouridine-5'-phosphate glycosidase from Chloroflexus aurantiacus (strain ATCC 29364 / DSM 637 / Y-400-fl).